The primary structure comprises 151 residues: Small ribosomal subunit protein uS15 (151 aa).

Over residues 1-16 (MPHRSRDKKGRSRSVR) the composition is skewed to basic residues. The interval 1–20 (MPHRSRDKKGRSRSVRPAHP) is disordered.

This sequence belongs to the universal ribosomal protein uS15 family. Part of the 30S ribosomal subunit.

This chain is Small ribosomal subunit protein uS15, found in Pyrobaculum aerophilum (strain ATCC 51768 / DSM 7523 / JCM 9630 / CIP 104966 / NBRC 100827 / IM2).